Here is a 573-residue protein sequence, read N- to C-terminus: MCSISFINLISISLTCFLLSLYYLLNNMVYFIEWEVVSLNSMSIVMTFLFDWMSLLFMSFVLMIASLVIFYSKEYMESDENINRFIMLVLMFVLSMMLLIISPNLVSILLGWDGLGLVSYCLVIYFQNIKSYNAGMLTALSNRIGDVALLLAIAWMLNYGSWNYIFYLEVMQNEFSMLMIGSLVMLAAMTKSAQIPFSSWLPAAMAAPTPVSALVHSSTLVTAGVYLLIRFNIVLSTSWLGQLLLLLSGLTMFMAGLGANFEFDLKKIIALSTLSQLGLMMSILSMGFYKLAMFHLLTHALFKALLFMCAGAIIHNMNNSQDIRLMGGLSIHMPLTSACFNVSNLALCGMPFLAGFYSKDMILEIVSISNINMFSFFLYFFSTGLTVSYSFRLVYYSMTGDLNCGSLNMLNDESWVMLRGMLGLLFMSIIGGSMLNWLIFPFPYMICLPGYLKMLTLFVCIVGGLFGYLISISNLYSLNKSLLNYNLTLFLGSMWFMPYISTYGMIFYPLNYGQLVVKSFDQGWSEYFGGQHLYYKLSNYSKTLFLMHNNSLKIYLMLFVFWIMILFSFLLFL.

Helical transmembrane passes span 4–24 (ISFINLISISLTCFLLSLYYL), 44–64 (IVMTFLFDWMSLLFMSFVLMI), 85–105 (FIMLVLMFVLSMMLLIISPNL), 106–126 (VSILLGWDGLGLVSYCLVIYF), 147–167 (VALLLAIAWMLNYGSWNYIFY), 170–190 (VMQNEFSMLMIGSLVMLAAMT), 212–234 (SALVHSSTLVTAGVYLLIRFNIV), 239–259 (WLGQLLLLLSGLTMFMAGLGA), 268–288 (IIALSTLSQLGLMMSILSMGF), 294–314 (FHLLTHALFKALLFMCAGAII), 337–357 (SACFNVSNLALCGMPFLAGFY), 377–396 (FLYFFSTGLTVSYSFRLVYY), 422–442 (LGLLFMSIIGGSMLNWLIFPF), 452–472 (LKMLTLFVCIVGGLFGYLISI), 487–507 (LTLFLGSMWFMPYISTYGMIF), and 552–572 (LKIYLMLFVFWIMILFSFLLF).

Belongs to the complex I subunit 5 family.

The protein resides in the mitochondrion inner membrane. The catalysed reaction is a ubiquinone + NADH + 5 H(+)(in) = a ubiquinol + NAD(+) + 4 H(+)(out). In terms of biological role, core subunit of the mitochondrial membrane respiratory chain NADH dehydrogenase (Complex I) that is believed to belong to the minimal assembly required for catalysis. Complex I functions in the transfer of electrons from NADH to the respiratory chain. The immediate electron acceptor for the enzyme is believed to be ubiquinone. This is NADH-ubiquinone oxidoreductase chain 5 (mt:ND5) from Drosophila yakuba (Fruit fly).